A 279-amino-acid polypeptide reads, in one-letter code: Replication factor A protein 2 (279 aa).

Residues 26–47 are disordered; sequence GAGFNEYDQSSQPSVDRQQGAG. Residues 32 to 46 are compositionally biased toward polar residues; the sequence is YDQSSQPSVDRQQGA. Residues 80–140 constitute a DNA-binding region (OB); the sequence is VTFVGVLRNI…GNIKIFSGKI (61 aa).

The protein belongs to the replication factor A protein 2 family. In terms of assembly, heterotrimer of 68, 30, and 12 kDa chains. In terms of processing, phosphorylated in a cell cycle-dependent manner. Hypophosphorylated in G1, becomes phosphorylated at the G1/S boundary, it is maintained in this state through the M phase.

The protein resides in the nucleus. Binds to single-stranded sequences. The chain is Replication factor A protein 2 (ssb2) from Schizosaccharomyces pombe (strain 972 / ATCC 24843) (Fission yeast).